The sequence spans 385 residues: UPF0284 protein A9601_04941 (385 aa).

This sequence belongs to the UPF0284 family.

The polypeptide is UPF0284 protein A9601_04941 (Prochlorococcus marinus (strain AS9601)).